The primary structure comprises 445 residues: Methionine aminopeptidase 2 (445 aa).

The disordered stretch occupies residues 1–89 (MAAQAPVDEI…DPPRVLISQL (89 aa)). Basic residues predominate over residues 60-74 (AKKKKKRKPKKKKKN). H198 is a substrate binding site. A divalent metal cation-binding residues include D218, D229, and H298. H306 provides a ligand contact to substrate. E331 and E426 together coordinate a divalent metal cation.

This sequence belongs to the peptidase M24A family. Methionine aminopeptidase eukaryotic type 2 subfamily. Co(2+) is required as a cofactor. Zn(2+) serves as cofactor. It depends on Mn(2+) as a cofactor. Requires Fe(2+) as cofactor.

The protein resides in the cytoplasm. It carries out the reaction Release of N-terminal amino acids, preferentially methionine, from peptides and arylamides.. Its function is as follows. Cotranslationally removes the N-terminal methionine from nascent proteins. The N-terminal methionine is often cleaved when the second residue in the primary sequence is small and uncharged (Met-Ala-, Cys, Gly, Pro, Ser, Thr, or Val). This Podospora anserina (strain S / ATCC MYA-4624 / DSM 980 / FGSC 10383) (Pleurage anserina) protein is Methionine aminopeptidase 2.